A 333-amino-acid chain; its full sequence is Cytochrome f (333 aa).

A signal peptide spans 1–44; the sequence is MRNACTRARLTRTARAMVKTLFIAIASVTFFFTSDLALPQSAAA. Residues Y45, C66, C69, and H70 each contribute to the heme site. Residues 299–318 form a helical membrane-spanning segment; it reads VGWLIAFVALVMLAQVMLVL.

The protein belongs to the cytochrome f family. In terms of assembly, the 4 large subunits of the cytochrome b6-f complex are cytochrome b6, subunit IV (17 kDa polypeptide, PetD), cytochrome f and the Rieske protein, while the 4 small subunits are PetG, PetL, PetM and PetN. The complex functions as a dimer. The cofactor is heme.

It localises to the cellular thylakoid membrane. Its function is as follows. Component of the cytochrome b6-f complex, which mediates electron transfer between photosystem II (PSII) and photosystem I (PSI), cyclic electron flow around PSI, and state transitions. This Trichormus variabilis (strain ATCC 29413 / PCC 7937) (Anabaena variabilis) protein is Cytochrome f.